A 585-amino-acid polypeptide reads, in one-letter code: ATP-dependent lipid A-core flippase (585 aa).

Helical transmembrane passes span 25 to 45 (FLAA…FPAI), 63 to 83 (WLFY…FGFL), 127 to 146 (IAYD…TSLI), 150 to 170 (LSIV…TLIT), 250 to 270 (QSPL…GVAL), and 277 to 297 (QTTV…MAPL). The ABC transmembrane type-1 domain occupies 26 to 309 (LAALACMGVA…VTDVNAPIQR (284 aa)). The ABC transporter domain maps to 341–577 (VEFDGVTFTY…DGLYARLYRM (237 aa)). 375 to 382 (GPSGSGKT) lines the ATP pocket.

Belongs to the ABC transporter superfamily. Lipid exporter (TC 3.A.1.106) family. As to quaternary structure, homodimer.

It localises to the cell inner membrane. It catalyses the reaction ATP + H2O + lipid A-core oligosaccharideSide 1 = ADP + phosphate + lipid A-core oligosaccharideSide 2.. Its function is as follows. Involved in lipopolysaccharide (LPS) biosynthesis. Translocates lipid A-core from the inner to the outer leaflet of the inner membrane. Transmembrane domains (TMD) form a pore in the inner membrane and the ATP-binding domain (NBD) is responsible for energy generation. The chain is ATP-dependent lipid A-core flippase from Dechloromonas aromatica (strain RCB).